The chain runs to 349 residues: Outer membrane protein assembly factor BamC (349 aa).

Residues 1–24 form the signal peptide; the sequence is MAILLQKSKVMKIAGMSLAMLLAA. A lipid anchor (N-palmitoyl cysteine) is attached at Cys25. Residue Cys25 is the site of S-diacylglycerol cysteine attachment.

This sequence belongs to the BamC family. Part of the Bam complex, which is composed of the outer membrane protein BamA, and four lipoproteins BamB, BamC, BamD and BamE.

Its subcellular location is the cell outer membrane. Its function is as follows. Part of the outer membrane protein assembly complex, which is involved in assembly and insertion of beta-barrel proteins into the outer membrane. This is Outer membrane protein assembly factor BamC from Photorhabdus asymbiotica subsp. asymbiotica (strain ATCC 43949 / 3105-77) (Xenorhabdus luminescens (strain 2)).